A 131-amino-acid polypeptide reads, in one-letter code: Small ribosomal subunit protein eS8 (131 aa).

The disordered stretch occupies residues 11-36; sequence DLKKPSGGKKGRVRKTKKKALCGGPP. A compositionally biased stretch (basic residues) spans 16-30; the sequence is SGGKKGRVRKTKKKA.

It belongs to the eukaryotic ribosomal protein eS8 family. Part of the 30S ribosomal subunit.

This is Small ribosomal subunit protein eS8 from Pyrobaculum islandicum (strain DSM 4184 / JCM 9189 / GEO3).